A 485-amino-acid chain; its full sequence is GTPase Obg (485 aa).

The 158-residue stretch at 2 to 159 (PRFVDRVVIH…RDLTLELKTV (158 aa)) folds into the Obg domain. Residues 160–341 (ADVGLIGFPS…LIFALWEMVK (182 aa)) enclose the OBG-type G domain. GTP-binding positions include 166–173 (GFPSAGKS), 191–195 (FTTLV), 212–215 (DVPG), 292–295 (NKID), and 322–324 (STV). Mg(2+) is bound by residues S173 and T193. The OCT domain occupies 359–437 (PIPVDESGFT…IGDVTFDWEP (79 aa)). The tract at residues 450–485 (RGTDIRLEQTDRVGAAERKAARRERRQPGESGGEDS) is disordered. The segment covering 452-468 (TDIRLEQTDRVGAAERK) has biased composition (basic and acidic residues).

This sequence belongs to the TRAFAC class OBG-HflX-like GTPase superfamily. OBG GTPase family. Monomer. Mg(2+) is required as a cofactor.

The protein resides in the cytoplasm. An essential GTPase which binds GTP, GDP and possibly (p)ppGpp with moderate affinity, with high nucleotide exchange rates and a fairly low GTP hydrolysis rate. Plays a role in control of the cell cycle, stress response, ribosome biogenesis and in those bacteria that undergo differentiation, in morphogenesis control. This Mycolicibacterium smegmatis (strain ATCC 700084 / mc(2)155) (Mycobacterium smegmatis) protein is GTPase Obg.